Reading from the N-terminus, the 343-residue chain is D-beta-hydroxybutyrate dehydrogenase, mitochondrial (343 aa).

The transit peptide at 1-46 directs the protein to the mitochondrion; it reads MLAARLSRPLSQLPGKALSVRDRENGTRHTLLFYPASFSPDTRRTY. An NAD(+)-binding site is contributed by 60–84; it reads ITGCDSGFGFSLAKHLHSKGFLVFA. N6-acetyllysine is present on residues Lys73 and Lys97. Lys103 bears the N6-acetyllysine; alternate mark. Lys103 carries the N6-succinyllysine; alternate modification. Residues Lys132 and Lys177 each carry the N6-acetyllysine modification. A substrate-binding site is contributed by Met196. Cys209 (proton acceptor) is an active-site residue. The residue at position 212 (Lys212) is an N6-acetyllysine. O-linked (GlcNAc) serine glycosylation occurs at Ser219. Residue Ser246 is modified to Phosphoserine. At Lys258 the chain carries N6-acetyllysine. Residue Lys259 is modified to N6-acetyllysine; alternate. Residue Lys259 is modified to N6-succinyllysine; alternate. Lys280 is subject to N6-acetyllysine.

It belongs to the short-chain dehydrogenases/reductases (SDR) family. As to quaternary structure, homotetramer. Acetylation of Lys-132 is observed in liver mitochondria from fasted mice but not from fed mice.

It localises to the mitochondrion inner membrane. It is found in the mitochondrion matrix. It carries out the reaction (R)-3-hydroxybutanoate + NAD(+) = acetoacetate + NADH + H(+). Requires phosphatidylcholine as an allosteric activator for enzymatic activity. The protein is D-beta-hydroxybutyrate dehydrogenase, mitochondrial of Mus musculus (Mouse).